We begin with the raw amino-acid sequence, 538 residues long: Growth factor receptor-bound protein 14 (538 aa).

The disordered stretch occupies residues 1-73 (MTTSLQDGQS…KAKDLEVQET (73 aa)). The residue at position 2 (Thr2) is an N-acetylthreonine. The span at 54–69 (ATRRGAMDRRKAKDLE) shows a compositional bias: basic and acidic residues. The 87-residue stretch at 104-190 (KKQVIKVYSE…NKLYLRKNYA (87 aa)) folds into the Ras-associating domain. In terms of domain architecture, PH spans 232–340 (YPEIHGFLHA…WVTAIRLLKY (109 aa)). A phosphoserine mark is found at Ser370 and Ser373. One can recognise an SH2 domain in the interval 437–533 (WFHHRISRDE…VLPCKLKHYC (97 aa)).

The protein belongs to the GRB7/10/14 family. Interacts with the cytoplasmic domain of the autophosphorylated insulin receptor, through the SH2 domain. Interacts with GRB14 (via BPS domain); this interaction protects the tyrosines in the activation loop on INSR from dephosphorylation. Binds to the ankyrin repeat region of TNKS2 via its N-terminus. Interacts with activated NRAS. Interacts (via SH2 domain) with TEK/TIE2 (tyrosine phosphorylated). In terms of processing, phosphorylated on serine residues. Phosphorylated on tyrosine residues by TEK/TIE2.

The protein localises to the cytoplasm. It is found in the endosome membrane. Adapter protein which modulates coupling of cell surface receptor kinases with specific signaling pathways. Binds to, and suppresses signals from, the activated insulin receptor (INSR). Potent inhibitor of insulin-stimulated MAPK3 phosphorylation. Plays a critical role regulating PDPK1 membrane translocation in response to insulin stimulation and serves as an adapter protein to recruit PDPK1 to activated insulin receptor, thus promoting PKB/AKT1 phosphorylation and transduction of the insulin signal. This Rattus norvegicus (Rat) protein is Growth factor receptor-bound protein 14 (Grb14).